We begin with the raw amino-acid sequence, 254 residues long: MESYLVDTYQGIPYTAAVQVDLVEKDLLPASLTIWFPLFQANTPPAVLLDQLKTLTITTLYAASQSGPILKVNASAQGAAMSVLPKKFEVNATVALDEYSKLEFDKLTVCEVKTVYLTTMKPYGMVSKFVSSAKPVGKKTHDLIALCDFMDLEKNTPVTIPAFIKSVSIKESESATVEAAISSEADQALTQAKIAPYAGLIMIMTMNNPKGIFKKLGAGTQVIVELGAYVQAESISKICKTWSHQGTRYVLKSR.

Residues 1–110 (MESYLVDTYQ…KLEFDKLTVC (110 aa)) form an interaction with M2-1 region. The nuclear targeting and binding to host importin KPNB1 stretch occupies residues 110–183 (CEVKTVYLTT…SATVEAAISS (74 aa)). The short motif at 194–206 (IAPYAGLIMIMTM) is the Nuclear export signal element. At threonine 205 the chain carries Phosphothreonine.

It belongs to the pneumovirinae M protein family. In terms of assembly, forms dimers. Forms higher-order oligomers. Interacts with glycoprotein G (via N-terminus). Interacts with protein M2-1; this interaction directs the matrix protein localization to cytoplasmic inclusions comprising viral proteins L, N, P, and M2-1 and mediates the matrix protein association with the nucleocapsid. Post-translationally, phosphorylation is important for oligomerization.

It localises to the virion. The protein localises to the host cytoplasm. It is found in the host nucleus. The protein resides in the host cell membrane. Its function is as follows. Plays a crucial role in virus assembly into filaments and budding. Early in infection, localizes in the nucleus where it may inhibit host cell transcription. Later in infection, traffics to the cytoplasm through the action of host CRM1 to associate with inclusion bodies, the site of viral transcription and replication. During virus assembly and budding, acts as a bridge between the nucleocapsid and the lipid bilayer. The polypeptide is Matrix protein (M) (Homo sapiens (Human)).